Consider the following 207-residue polypeptide: Protein lin-7 homolog B (207 aa).

A Kinase interacting site motif is present at residues 1–13 (MAALVEPLGLERD). Positions 10–65 (LERDVSRAVELLERLQRSGELPPQKLQALQRVLQSRFCSAIREVYEQLYDTLDITG) constitute an L27 domain. In terms of domain architecture, PDZ spans 93–175 (VVELPKTDEG…SVKLVVRYTP (83 aa)). Positions 187-207 (KMRSARRRQQHQSYSSLESRG) are disordered. A compositionally biased stretch (polar residues) spans 197-207 (HQSYSSLESRG).

The protein belongs to the lin-7 family. As to quaternary structure, forms a complex with CASK and CASKIN1. Component of the brain-specific heterotrimeric complex (LIN-10-LIN-2-LIN-7 complex) composed of at least APBA1, CASK, and LIN7, which associates with the motor protein KIF17 to transport vesicles along microtubules. Forms a heterotrimeric complex composed of MMP5, LIN7B and PATJ; the N-terminal L27 domain of PALS1 interacts with the L27 domain of PATJ and the C-terminal L27 domain of PALS1 interacts with the L27 domain of LIN7B. Forms a heterotrimeric complex with DLG1 and CASK via their L27 domains. Interacts with DLG4 and GRIN2B as well as CDH1 and CTNNB1, the channels KCNJ12/Kir2.2, KCNJ4/Kir2.3 and probably KCNJ2/Kir2.1 and SLC6A12/BGT-1 via its PDZ domain. The association of LIN7A with cadherin and beta-catenin is calcium-dependent, occurs at synaptic junctions and requires the actin cytoskeleton. Interacts with EGFR, ERBB2, ERBB3 and ERBB4 with both PDZ and KID domains. Associates with KIF17 via APBA1. Interacts with ASIC3. Interacts with TOPK. Interacts with RTKN. Interacts with APBA1. Interacts with MPP7. Interacts with DLG2. Interacts with DLG3.

Its subcellular location is the cell membrane. It is found in the basolateral cell membrane. The protein resides in the cell junction. It localises to the postsynaptic density membrane. The protein localises to the tight junction. In terms of biological role, plays a role in establishing and maintaining the asymmetric distribution of channels and receptors at the plasma membrane of polarized cells. Forms membrane-associated multiprotein complexes that may regulate delivery and recycling of proteins to the correct membrane domains. The tripartite complex composed of LIN7 (LIN7A, LIN7B or LIN7C), CASK and APBA1 associates with the motor protein KIF17 to transport vesicles containing N-methyl-D-aspartate (NMDA) receptor subunit NR2B along microtubules. This complex may have the potential to couple synaptic vesicle exocytosis to cell adhesion in brain. Ensures the proper localization of GRIN2B (subunit 2B of the NMDA receptor) to neuronal postsynaptic density and may function in localizing synaptic vesicles at synapses where it is recruited by beta-catenin and cadherin. Required to localize Kir2 channels, GABA transporter (SLC6A12) and EGFR/ERBB1, ERBB2, ERBB3 and ERBB4 to the basolateral membrane of epithelial cells. May increase the amplitude of ASIC3 acid-evoked currents by stabilizing the channel at the cell surface. The sequence is that of Protein lin-7 homolog B (LIN7B) from Homo sapiens (Human).